The sequence spans 810 residues: MSKGPGPGGSAASSAPPAATAQVLQAQPEKPQHYTYLKEFRTEQCPLFVQHKCTQHRPYTCFHWHFVNQRRRRSIRRRDGTFNYSPDVYCTKYDEATGLCPEGDECPFLHRTTGDTERRYHLRYYKTGICIHETDSKGNCTKNGLHCAFAHGPHDLRSPVYDIRELQAMEALQNGQTTVEGSIEGQTAGAASHAMIEKILSEEPRWQETAYVLGNYKTEPCKKPPRLCRQGYACPYYHNSKDRRRSPRKHKYRSSPCPNVKHGDEWGDPGKCENGDACQYCHTRTEQQFHPEIYKSTKCNDMQQSGSCPRGPFCAFAHVEQPPLSDDLQPSSTVSSPTQPGPVLYMPSAAGDSVPVSPSSPHAPDLSTLLCRNSNLGSPSNLCGSPPGSIRKPPNLEGIVFPGESGLAPGSYKKAPGFEREDQVGAEYLKNFKCQAKLKPHSLEPRSQEQPLLQPKQDMLGILPVGSPLTSSISSSITSSLAATPPSPAGTSSVPGMNANALPFYPTSDTVESVIESALDDLDLNEFGVAALEKTFDNSTVPHPGSITIGGSLLQSSAPVNIPGSLGSSASFHSASPSPPVSLSSHFLQQPQGHLSQSENTFLGTSASHGSLGLNGMNSSIWEHFASGSFSPGTFPAFLSGPGAAELARLRQELEEANGTIKQWEESWKQAKQACDAWKKEAEEAGERASAAGAECELAREQRDALEGQVKKLQEELERLHSGPDPQALPTFSDLEALSLSTLYSLQKQLRAHLEQVDKAVFHMQSVKCLKCQEQNRAVLPCQHAVLCELCAEGSECPVCQPSRAHTLQS.

Residues Met1–Leu24 form a disordered region. Residues Ser10 to Ala19 are compositionally biased toward low complexity. 5 C3H1-type zinc fingers span residues Tyr84–Thr113, Tyr124–His154, Asn215–Lys241, Lys251–Thr285, and Ile293–Gln321. The interval Asn239–Glu265 is disordered. Ser240 carries the post-translational modification Phosphoserine. Over residues Lys241–Arg253 the composition is skewed to basic residues. Residues Leu324 to Val343 are disordered. The span at Gln329 to Val343 shows a compositional bias: low complexity. Phosphoserine occurs at positions 374, 378, and 385. A compositionally biased stretch (low complexity) spans Ser569 to Ser585. The interval Ser569 to Phe602 is disordered. Over residues His586 to Phe602 the composition is skewed to polar residues. At Ser631 the chain carries Phosphoserine. A coiled-coil region spans residues Gly643 to Gly723. An RING-type; degenerate zinc finger spans residues Ser766–Gln801.

Belongs to the unkempt family.

Its subcellular location is the cytoplasm. In terms of biological role, sequence-specific RNA-binding protein which plays an important role in the establishment and maintenance of the early morphology of cortical neurons during embryonic development. Acts as a translation repressor and controls a translationally regulated cell morphology program to ensure proper structuring of the nervous system. Translational control depends on recognition of its binding element within target mRNAs which consists of a mandatory UAG trimer upstream of a U/A-rich motif. Associated with polysomes. The sequence is that of RING finger protein unkempt homolog (UNK) from Canis lupus familiaris (Dog).